The sequence spans 123 residues: Small ribosomal subunit protein uS12 (123 aa).

D89 bears the 3-methylthioaspartic acid mark. Positions 100–123 (GSLDTSGVKGRNQGRSKYGTKRPK) are disordered. Residues 111-123 (NQGRSKYGTKRPK) show a composition bias toward basic residues.

It belongs to the universal ribosomal protein uS12 family. Part of the 30S ribosomal subunit. Contacts proteins S8 and S17. May interact with IF1 in the 30S initiation complex.

Functionally, with S4 and S5 plays an important role in translational accuracy. Interacts with and stabilizes bases of the 16S rRNA that are involved in tRNA selection in the A site and with the mRNA backbone. Located at the interface of the 30S and 50S subunits, it traverses the body of the 30S subunit contacting proteins on the other side and probably holding the rRNA structure together. The combined cluster of proteins S8, S12 and S17 appears to hold together the shoulder and platform of the 30S subunit. The sequence is that of Small ribosomal subunit protein uS12 from Pseudomonas fluorescens (strain ATCC BAA-477 / NRRL B-23932 / Pf-5).